Consider the following 240-residue polypeptide: Leucyl/phenylalanyl-tRNA--protein transferase (240 aa).

The protein belongs to the L/F-transferase family.

It is found in the cytoplasm. The catalysed reaction is N-terminal L-lysyl-[protein] + L-leucyl-tRNA(Leu) = N-terminal L-leucyl-L-lysyl-[protein] + tRNA(Leu) + H(+). The enzyme catalyses N-terminal L-arginyl-[protein] + L-leucyl-tRNA(Leu) = N-terminal L-leucyl-L-arginyl-[protein] + tRNA(Leu) + H(+). It catalyses the reaction L-phenylalanyl-tRNA(Phe) + an N-terminal L-alpha-aminoacyl-[protein] = an N-terminal L-phenylalanyl-L-alpha-aminoacyl-[protein] + tRNA(Phe). In terms of biological role, functions in the N-end rule pathway of protein degradation where it conjugates Leu, Phe and, less efficiently, Met from aminoacyl-tRNAs to the N-termini of proteins containing an N-terminal arginine or lysine. The protein is Leucyl/phenylalanyl-tRNA--protein transferase of Maridesulfovibrio salexigens (strain ATCC 14822 / DSM 2638 / NCIMB 8403 / VKM B-1763) (Desulfovibrio salexigens).